Reading from the N-terminus, the 147-residue chain is D-aminoacyl-tRNA deacylase (147 aa).

The Gly-cisPro motif, important for rejection of L-amino acids motif lies at 136 to 137; it reads GP.

It belongs to the DTD family. In terms of assembly, homodimer.

The protein resides in the cytoplasm. It carries out the reaction glycyl-tRNA(Ala) + H2O = tRNA(Ala) + glycine + H(+). The catalysed reaction is a D-aminoacyl-tRNA + H2O = a tRNA + a D-alpha-amino acid + H(+). In terms of biological role, an aminoacyl-tRNA editing enzyme that deacylates mischarged D-aminoacyl-tRNAs. Also deacylates mischarged glycyl-tRNA(Ala), protecting cells against glycine mischarging by AlaRS. Acts via tRNA-based rather than protein-based catalysis; rejects L-amino acids rather than detecting D-amino acids in the active site. By recycling D-aminoacyl-tRNA to D-amino acids and free tRNA molecules, this enzyme counteracts the toxicity associated with the formation of D-aminoacyl-tRNA entities in vivo and helps enforce protein L-homochirality. The protein is D-aminoacyl-tRNA deacylase of Persephonella marina (strain DSM 14350 / EX-H1).